Consider the following 554-residue polypeptide: Alpha-taxilin (554 aa).

A disordered region spans residues 1–66 (MKNQDKKNGP…ARAKAAQPGA (66 aa)). Ser71 is modified (phosphoserine). The interval 85 to 166 (YCVDNNQGGP…RRPQEKKKAK (82 aa)) is disordered. The segment covering 91 to 103 (QGGPAEEGAQGEP) has biased composition (low complexity). The segment covering 143–158 (EEIRASDEVGDRDHRR) has biased composition (basic and acidic residues). A coiled-coil region spans residues 186–491 (EEKLAALCKK…NKRVQDLTAG (306 aa)). The tract at residues 492 to 554 (GITDIGSERR…GPGEPTPATA (63 aa)) is disordered. Residues Ser515 and Ser523 each carry the phosphoserine modification.

This sequence belongs to the taxilin family. As to quaternary structure, binds to the C-terminal coiled coil region of syntaxin family members STX1A, STX3A and STX4A, but not when these proteins are complexed with SNAP25, VAMP2 or STXBP1, suggesting that it interacts with syntaxins that do not form the SNARE complex.

May be involved in intracellular vesicle traffic and potentially in calcium-dependent exocytosis in neuroendocrine cells. This Mus musculus (Mouse) protein is Alpha-taxilin (Txlna).